Here is a 112-residue protein sequence, read N- to C-terminus: Ribonuclease P protein component (112 aa).

This sequence belongs to the RnpA family. As to quaternary structure, consists of a catalytic RNA component (M1 or rnpB) and a protein subunit.

It catalyses the reaction Endonucleolytic cleavage of RNA, removing 5'-extranucleotides from tRNA precursor.. In terms of biological role, RNaseP catalyzes the removal of the 5'-leader sequence from pre-tRNA to produce the mature 5'-terminus. It can also cleave other RNA substrates such as 4.5S RNA. The protein component plays an auxiliary but essential role in vivo by binding to the 5'-leader sequence and broadening the substrate specificity of the ribozyme. The chain is Ribonuclease P protein component from Clostridium kluyveri (strain ATCC 8527 / DSM 555 / NBRC 12016 / NCIMB 10680 / K1).